Here is a 570-residue protein sequence, read N- to C-terminus: Phosphoenolpyruvate-protein phosphotransferase (570 aa).

His189 serves as the catalytic Tele-phosphohistidine intermediate. Phosphoenolpyruvate is bound by residues Arg296 and Arg332. Residues Glu431 and Asp455 each coordinate Mg(2+). Residues 454-455 (ND) and Arg465 each bind phosphoenolpyruvate. The active-site Proton donor is Cys502.

The protein belongs to the PEP-utilizing enzyme family. As to quaternary structure, homodimer. Interacts with FloT. Mg(2+) is required as a cofactor.

It is found in the cytoplasm. It localises to the membrane raft. It carries out the reaction L-histidyl-[protein] + phosphoenolpyruvate = N(pros)-phospho-L-histidyl-[protein] + pyruvate. In terms of biological role, general (non sugar-specific) component of the phosphoenolpyruvate-dependent sugar phosphotransferase system (sugar PTS). This major carbohydrate active-transport system catalyzes the phosphorylation of incoming sugar substrates concomitantly with their translocation across the cell membrane. Enzyme I transfers the phosphoryl group from phosphoenolpyruvate (PEP) to the phosphoryl carrier protein (HPr). This is Phosphoenolpyruvate-protein phosphotransferase (ptsI) from Bacillus subtilis (strain 168).